Consider the following 751-residue polypeptide: Zinc finger protein 337 (751 aa).

One can recognise a KRAB domain in the interval 12–83 (LAFGDVTVDF…ERRRRPGPCA (72 aa)). Over residues 101–116 (QRQQQLQFSDQSFQSD) the composition is skewed to low complexity. Residues 101 to 163 (QRQQQLQFSD…SSQGQRENPT (63 aa)) form a disordered region. A C2H2-type 1; degenerate zinc finger spans residues 180–202 (FKCAERGQDFSRKMMVIIHKKAH). C2H2-type zinc fingers lie at residues 208 to 230 (FTCR…QNTH), 236 to 258 (YVCS…QRTH), 264 to 286 (FLCK…ERTH), 292 to 314 (YECQ…LKAH), 320 to 342 (FVCK…KRIH), 348 to 370 (YRCQ…QRTH), 376 to 398 (FACR…QRTH), 404 to 426 (FVCK…QRTH), and 432 to 454 (FVCR…QITH). A Glycyl lysine isopeptide (Lys-Gly) (interchain with G-Cter in SUMO2) cross-link involves residue Lys-458. 10 consecutive C2H2-type zinc fingers follow at residues 460-482 (FVCK…QRTH), 488-510 (YGCR…LRAH), 516-538 (FFCR…QRTH), 544-566 (FMCK…QWTH), 572-594 (FNCK…QKTH), 600-622 (FICS…QLAH), 628-650 (FVCK…QRTH), 656-679 (FVCN…WRIH), 685-707 (FVCQ…ERIH), and 713-735 (YECQ…LKRH).

It belongs to the krueppel C2H2-type zinc-finger protein family.

It localises to the nucleus. Its function is as follows. May be involved in transcriptional regulation. This is Zinc finger protein 337 (ZNF337) from Homo sapiens (Human).